We begin with the raw amino-acid sequence, 170 residues long: MGKRYFCDYCDRSFQDNLHNRKKHLNGLQHLKAKKVWYDMFRDAAAILLDEQNKRPCRKFLLTGQCDFGSNCRFSHMSERDLQELSIQVEEERRAREWLLDAPELPEGHLEDWLEKRAKRLSSAPSSRAEPIRTTVFQYPVGWPPVQELPPSLRAPPPGGWPLQPRVQWG.

Residues 51–79 (EQNKRPCRKFLLTGQCDFGSNCRFSHMSE) form a C3H1-type zinc finger. The disordered stretch occupies residues 150-170 (PPSLRAPPPGGWPLQPRVQWG).

In terms of assembly, component of the U11/U12 snRNPs that are part of the U12-type spliceosome. Not found in the major spliceosome.

It is found in the nucleus. This is Zinc finger matrin-type protein 5 (ZMAT5) from Homo sapiens (Human).